The sequence spans 173 residues: Crossover junction endodeoxyribonuclease RuvC (173 aa).

Residues D8, E67, and D139 contribute to the active site. 3 residues coordinate Mg(2+): D8, E67, and D139.

Belongs to the RuvC family. In terms of assembly, homodimer which binds Holliday junction (HJ) DNA. The HJ becomes 2-fold symmetrical on binding to RuvC with unstacked arms; it has a different conformation from HJ DNA in complex with RuvA. In the full resolvosome a probable DNA-RuvA(4)-RuvB(12)-RuvC(2) complex forms which resolves the HJ. Requires Mg(2+) as cofactor.

It is found in the cytoplasm. It carries out the reaction Endonucleolytic cleavage at a junction such as a reciprocal single-stranded crossover between two homologous DNA duplexes (Holliday junction).. Its function is as follows. The RuvA-RuvB-RuvC complex processes Holliday junction (HJ) DNA during genetic recombination and DNA repair. Endonuclease that resolves HJ intermediates. Cleaves cruciform DNA by making single-stranded nicks across the HJ at symmetrical positions within the homologous arms, yielding a 5'-phosphate and a 3'-hydroxyl group; requires a central core of homology in the junction. The consensus cleavage sequence is 5'-(A/T)TT(C/G)-3'. Cleavage occurs on the 3'-side of the TT dinucleotide at the point of strand exchange. HJ branch migration catalyzed by RuvA-RuvB allows RuvC to scan DNA until it finds its consensus sequence, where it cleaves and resolves the cruciform DNA. In Tolumonas auensis (strain DSM 9187 / NBRC 110442 / TA 4), this protein is Crossover junction endodeoxyribonuclease RuvC.